The primary structure comprises 469 residues: 1-aminocyclopropane-1-carboxylate synthase 8 (469 aa).

Glu47 and Tyr85 together coordinate substrate. Lys272 is modified (N6-(pyridoxal phosphate)lysine).

The protein belongs to the class-I pyridoxal-phosphate-dependent aminotransferase family. Homodimer and heterodimer. In vivo, the relevance of heterodimerization with other ACS enzymes is however unsure. Interacts with GRF3. It depends on pyridoxal 5'-phosphate as a cofactor. May be processed at its C-terminus. Expressed in roots. Expressed at low level in flowers and siliques.

It carries out the reaction S-adenosyl-L-methionine = 1-aminocyclopropane-1-carboxylate + S-methyl-5'-thioadenosine + H(+). It participates in alkene biosynthesis; ethylene biosynthesis via S-adenosyl-L-methionine; ethylene from S-adenosyl-L-methionine: step 1/2. 1-aminocyclopropane-1-carboxylate synthase (ACS) enzymes catalyze the conversion of S-adenosyl-L-methionine (SAM) into 1-aminocyclopropane-1-carboxylate (ACC), a direct precursor of ethylene. The polypeptide is 1-aminocyclopropane-1-carboxylate synthase 8 (ACS8) (Arabidopsis thaliana (Mouse-ear cress)).